Here is a 297-residue protein sequence, read N- to C-terminus: Cbb3-type cytochrome c oxidase subunit CcoP (297 aa).

Residues M1 to T35 lie on the Cytoplasmic side of the membrane. The helical transmembrane segment at F36–F56 threads the bilayer. Over S57–Q297 the chain is Periplasmic. Cytochrome c domains are found at residues Y108–S199 and V206–G294. Positions 121, 124, 125, 174, 219, 222, 223, and 264 each coordinate heme c.

It belongs to the CcoP / FixP family. Component of the cbb3-type cytochrome c oxidase at least composed of CcoN, CcoO, CcoQ and CcoP. Interacts with CcoQ. Requires heme c as cofactor.

The protein localises to the cell inner membrane. The protein operates within energy metabolism; oxidative phosphorylation. C-type cytochrome. Part of the cbb3-type cytochrome c oxidase complex. CcoP subunit is required for transferring electrons from donor cytochrome c via its heme groups to CcoO subunit. From there, electrons are shuttled to the catalytic binuclear center of CcoN subunit where oxygen reduction takes place. The complex also functions as a proton pump. The chain is Cbb3-type cytochrome c oxidase subunit CcoP from Rhodobacter capsulatus (Rhodopseudomonas capsulata).